Reading from the N-terminus, the 425-residue chain is Dihydroorotase (425 aa).

Residues histidine 56 and histidine 58 each contribute to the Zn(2+) site. Residues 58–60 and asparagine 90 each bind substrate; that span reads HWR. Residues aspartate 147, histidine 174, and histidine 227 each contribute to the Zn(2+) site. Asparagine 273 is a binding site for substrate. Residue aspartate 300 coordinates Zn(2+). Aspartate 300 is an active-site residue. Residues histidine 304 and 318–319 contribute to the substrate site; that span reads FG.

This sequence belongs to the metallo-dependent hydrolases superfamily. DHOase family. Class I DHOase subfamily. Zn(2+) is required as a cofactor.

The catalysed reaction is (S)-dihydroorotate + H2O = N-carbamoyl-L-aspartate + H(+). Its pathway is pyrimidine metabolism; UMP biosynthesis via de novo pathway; (S)-dihydroorotate from bicarbonate: step 3/3. Functionally, catalyzes the reversible cyclization of carbamoyl aspartate to dihydroorotate. The protein is Dihydroorotase of Fusobacterium nucleatum subsp. nucleatum (strain ATCC 25586 / DSM 15643 / BCRC 10681 / CIP 101130 / JCM 8532 / KCTC 2640 / LMG 13131 / VPI 4355).